Reading from the N-terminus, the 55-residue chain is ATP synthase F(0) complex subunit 8 (55 aa).

The chain crosses the membrane as a helical span at residues 4–24 (LLPTPWFTIFIYAWMVLLAVI).

This sequence belongs to the ATPase protein 8 family. Component of the ATP synthase complex composed at least of ATP5F1A/subunit alpha, ATP5F1B/subunit beta, ATP5MC1/subunit c (homooctomer), MT-ATP6/subunit a, MT-ATP8/subunit 8, ATP5ME/subunit e, ATP5MF/subunit f, ATP5MG/subunit g, ATP5MK/subunit k, ATP5MJ/subunit j, ATP5F1C/subunit gamma, ATP5F1D/subunit delta, ATP5F1E/subunit epsilon, ATP5PF/subunit F6, ATP5PB/subunit b, ATP5PD/subunit d, ATP5PO/subunit OSCP. ATP synthase complex consists of a soluble F(1) head domain (subunits alpha(3) and beta(3)) - the catalytic core - and a membrane F(0) domain - the membrane proton channel (subunits c, a, 8, e, f, g, k and j). These two domains are linked by a central stalk (subunits gamma, delta, and epsilon) rotating inside the F1 region and a stationary peripheral stalk (subunits F6, b, d, and OSCP).

Its subcellular location is the mitochondrion membrane. Its function is as follows. Subunit 8, of the mitochondrial membrane ATP synthase complex (F(1)F(0) ATP synthase or Complex V) that produces ATP from ADP in the presence of a proton gradient across the membrane which is generated by electron transport complexes of the respiratory chain. ATP synthase complex consist of a soluble F(1) head domain - the catalytic core - and a membrane F(1) domain - the membrane proton channel. These two domains are linked by a central stalk rotating inside the F(1) region and a stationary peripheral stalk. During catalysis, ATP synthesis in the catalytic domain of F(1) is coupled via a rotary mechanism of the central stalk subunits to proton translocation. In vivo, can only synthesize ATP although its ATP hydrolase activity can be activated artificially in vitro. Part of the complex F(0) domain. This is ATP synthase F(0) complex subunit 8 from Dicentrarchus labrax (European seabass).